The following is a 571-amino-acid chain: Septation ring formation regulator EzrA (571 aa).

Residues 1 to 3 lie on the Extracellular side of the membrane; sequence MYY. A helical membrane pass occupies residues 4-22; it reads MLIGFIIVVIAIISAGYIL. The Cytoplasmic portion of the chain corresponds to 23-571; the sequence is KRKHYQRINE…ESKVSVDDIE (549 aa). Coiled-coil stretches lie at residues 169 to 214, 249 to 298, 326 to 374, 400 to 438, and 474 to 529; these read VETK…AQME, AQME…DTLE, DALA…ASGE, KFAE…RERL, and TQDW…ENHF.

It belongs to the EzrA family.

It localises to the cell membrane. Negative regulator of FtsZ ring formation; modulates the frequency and position of FtsZ ring formation. Inhibits FtsZ ring formation at polar sites. Interacts either with FtsZ or with one of its binding partners to promote depolymerization. This is Septation ring formation regulator EzrA from Listeria welshimeri serovar 6b (strain ATCC 35897 / DSM 20650 / CCUG 15529 / CIP 8149 / NCTC 11857 / SLCC 5334 / V8).